A 329-amino-acid polypeptide reads, in one-letter code: tRNA-modifying protein YgfZ (329 aa).

Folate is bound by residues W27 and W189.

The protein belongs to the tRNA-modifying YgfZ family.

It is found in the cytoplasm. Functionally, folate-binding protein involved in regulating the level of ATP-DnaA and in the modification of some tRNAs. It is probably a key factor in regulatory networks that act via tRNA modification, such as initiation of chromosomal replication. This Cronobacter sakazakii (strain ATCC BAA-894) (Enterobacter sakazakii) protein is tRNA-modifying protein YgfZ.